The following is a 976-amino-acid chain: Serine/threonine-protein kinase CLA4 (976 aa).

A disordered region spans residues Met-1 to Leu-46. Residues Ala-23 to Ser-43 show a composition bias toward gly residues. Residues Ser-73–Pro-184 enclose the PH domain. The segment at Leu-207–Thr-231 is disordered. The CRIB domain occupies Val-237–Gly-250. 2 disordered regions span residues Gly-298–Pro-522 and Ser-559–Lys-658. Low complexity-rich tracts occupy residues Asn-313 to Asn-332 and Leu-371 to Asn-411. The span at Ser-430–Lys-440 shows a compositional bias: polar residues. Over residues Asn-441–Arg-455 the composition is skewed to basic and acidic residues. A compositionally biased stretch (low complexity) spans Thr-456 to Gln-487. Over residues Gln-496–Gly-505 the composition is skewed to pro residues. A compositionally biased stretch (low complexity) spans Ser-559–Pro-583. Polar residues predominate over residues Asn-622–Asp-635. A Protein kinase domain is found at Phe-685–Ile-940. ATP contacts are provided by residues Ala-691–Val-699 and Lys-715. The Proton acceptor role is filled by Asp-808.

It belongs to the protein kinase superfamily. STE Ser/Thr protein kinase family. STE20 subfamily. Interacts (via the CRIB domain) with CDC42.

It catalyses the reaction L-seryl-[protein] + ATP = O-phospho-L-seryl-[protein] + ADP + H(+). It carries out the reaction L-threonyl-[protein] + ATP = O-phospho-L-threonyl-[protein] + ADP + H(+). Functionally, ser/Thr kinase required for wild-type filamentous growth, chlamydospore formation, and virulence in mouse systemic infection. The polypeptide is Serine/threonine-protein kinase CLA4 (CLA4) (Candida albicans (strain SC5314 / ATCC MYA-2876) (Yeast)).